The following is a 169-amino-acid chain: Lipoprotein signal peptidase (169 aa).

The next 4 membrane-spanning stretches (helical) occupy residues 10–30 (LPWLWITVLVFVLDQLSKAFF), 40–60 (IVVIPDLFSWTLAYNTGAAFS), 68–88 (WQRWLFALIAIVVSAILVVWL), and 94–114 (GETWLAIALALVLGGALGNLY). Catalysis depends on residues Asp-124 and Asp-143. The chain crosses the membrane as a helical span at residues 135 to 155 (YFPAFNLADSAITVGAVMLAL).

It belongs to the peptidase A8 family.

The protein localises to the cell inner membrane. The enzyme catalyses Release of signal peptides from bacterial membrane prolipoproteins. Hydrolyzes -Xaa-Yaa-Zaa-|-(S,diacylglyceryl)Cys-, in which Xaa is hydrophobic (preferably Leu), and Yaa (Ala or Ser) and Zaa (Gly or Ala) have small, neutral side chains.. The protein operates within protein modification; lipoprotein biosynthesis (signal peptide cleavage). This protein specifically catalyzes the removal of signal peptides from prolipoproteins. The sequence is that of Lipoprotein signal peptidase from Pseudomonas aeruginosa (strain UCBPP-PA14).